The primary structure comprises 213 residues: Protein Flattop (213 aa).

A disordered region spans residues 127-213; the sequence is VDQPAEQSKI…HNSRPASQEK (87 aa). Over residues 151–213 the composition is skewed to polar residues; sequence QHIQDQSRPA…HNSRPASQEK (63 aa).

This sequence belongs to the Flattop family.

The protein resides in the cytoplasm. The protein localises to the cytoskeleton. It localises to the cilium basal body. Its subcellular location is the cell projection. It is found in the cilium. The protein resides in the apical cell membrane. The protein localises to the cilium axoneme. In terms of biological role, microtubule inner protein (MIP) part of the dynein-decorated doublet microtubules (DMTs) in cilia axoneme. Acts as a regulator of cilium basal body docking and positioning in mono- and multiciliated cells. Regulates basal body docking and cilia formation in multiciliated lung cells. Regulates kinocilium positioning and stereocilia bundle morphogenesis in the inner ear. In Danio rerio (Zebrafish), this protein is Protein Flattop.